The sequence spans 152 residues: Methylglyoxal synthase (152 aa).

The 147-residue stretch at 6-152 (RTMATAKNIA…YQHYLNGRLK (147 aa)) folds into the MGS-like domain. Residues His19, Lys23, 45-48 (TGTT), and 65-66 (SG) each bind substrate. Catalysis depends on Asp71, which acts as the Proton donor/acceptor. His98 is a binding site for substrate.

The protein belongs to the methylglyoxal synthase family.

The enzyme catalyses dihydroxyacetone phosphate = methylglyoxal + phosphate. Its function is as follows. Catalyzes the formation of methylglyoxal from dihydroxyacetone phosphate. The chain is Methylglyoxal synthase from Photorhabdus laumondii subsp. laumondii (strain DSM 15139 / CIP 105565 / TT01) (Photorhabdus luminescens subsp. laumondii).